The sequence spans 372 residues: Delta-type opioid receptor (372 aa).

The Extracellular segment spans residues 1–47; that stretch reads MELVPSARAELQSSPLVNLSDAFPSAFPSAGANASGSPGARSASSLA. Residues Asn-18 and Asn-33 are each glycosylated (N-linked (GlcNAc...) asparagine). The chain crosses the membrane as a helical span at residues 48–75; it reads LAIAITALYSAVCAVGLLGNVLVMFGIV. The Cytoplasmic segment spans residues 76 to 85; the sequence is RYTKLKTATN. The helical transmembrane segment at 86-110 threads the bilayer; sequence IYIFNLALADALATSTLPFQSAKYL. Residues 111 to 122 lie on the Extracellular side of the membrane; it reads METWPFGELLCK. A disulfide bridge connects residues Cys-121 and Cys-198. A helical membrane pass occupies residues 123–144; it reads AVLSIDYYNMFTSIFTLTMMSV. The Cytoplasmic segment spans residues 145-163; it reads DRYIAVCHPVKALDFRTPA. Residues 164–186 form a helical membrane-spanning segment; the sequence is KAKLINICIWVLASGVGVPIMVM. Residues 187–206 lie on the Extracellular side of the membrane; the sequence is AVTQPRDGAVVCMLQFPSPS. A helical transmembrane segment spans residues 207 to 238; sequence WYWDTVTKICVFLFAFVVPILIITVCYGLMLL. Over 239–261 the chain is Cytoplasmic; sequence RLRSVRLLSGSKEKDRSLRRITR. Residues 262–284 form a helical membrane-spanning segment; it reads MVLVVVGAFVVCWAPIHIFVIVW. The Extracellular portion of the chain corresponds to 285-299; sequence TLVDINRRDPLVVAA. Residues 300–321 traverse the membrane as a helical segment; that stretch reads LHLCIALGYANSSLNPVLYAFL. At 322-372 the chain is on the cytoplasmic side; that stretch reads DENFKRCFRQLCRTPCGRQEPGSLRRPRQATTRERVTACTPSDGPGGGAAA. Cys-333 is lipidated: S-palmitoyl cysteine. A disordered region spans residues 340 to 372; the sequence is QEPGSLRRPRQATTRERVTACTPSDGPGGGAAA.

It belongs to the G-protein coupled receptor 1 family. May form homooligomers. Forms a heterodimer with OPRM1. Interacts with GPRASP1. Interacts with RTP4; the interaction promotes cell surface localization of the OPRD1-OPRM1 heterodimer. Ubiquitinated. A basal ubiquitination seems not to be related to degradation. Ubiquitination is increased upon formation of OPRM1:OPRD1 oligomers leading to proteasomal degradation; the ubiquitination is diminished by RTP4. In terms of tissue distribution, brain, with high concentrations in the basal ganglia and limbic regions.

It is found in the cell membrane. G-protein coupled receptor that functions as a receptor for endogenous enkephalins and for a subset of other opioids. Ligand binding causes a conformation change that triggers signaling via guanine nucleotide-binding proteins (G proteins) and modulates the activity of down-stream effectors, such as adenylate cyclase. Signaling leads to the inhibition of adenylate cyclase activity. Inhibits neurotransmitter release by reducing calcium ion currents and increasing potassium ion conductance. Plays a role in the perception of pain and in opiate-mediated analgesia. Plays a role in developing analgesic tolerance to morphine. The chain is Delta-type opioid receptor (Oprd1) from Mus musculus (Mouse).